We begin with the raw amino-acid sequence, 1626 residues long: DNA topoisomerase 2-beta (1626 aa).

An N-acetylalanine modification is found at Ala-2. Lys-3 carries the N6-acetyllysine modification. Glycyl lysine isopeptide (Lys-Gly) (interchain with G-Cter in SUMO2) cross-links involve residues Gln-28, Asn-29, Lys-33, and Lys-34. ATP-binding positions include Asn-112, Asn-141, and 169–171 (SSN). Residues Lys-177 and Lys-178 each participate in a glycyl lysine isopeptide (Lys-Gly) (interchain with G-Cter in SUMO2) cross-link. 182-189 (GRNGYGAK) contributes to the ATP binding site. Residues Lys-228 and Lys-299 each participate in a glycyl lysine isopeptide (Lys-Gly) (interchain with G-Cter in SUMO2) cross-link. The interaction with DNA stretch occupies residues 363-365 (KKK). Glycyl lysine isopeptide (Lys-Gly) (interchain with G-Cter in SUMO2) cross-links involve residues Lys-367 and Lys-373. Residue 397-399 (QTK) participates in ATP binding. Glycyl lysine isopeptide (Lys-Gly) (interchain with G-Cter in SUMO2) cross-links involve residues Lys-437, Lys-439, and Lys-446. One can recognise a Toprim domain in the interval 476 to 593 (CTLILTEGDS…SLLKHGFLEE (118 aa)). Mg(2+)-binding residues include Glu-482, Asp-562, and Asp-564. Glycyl lysine isopeptide (Lys-Gly) (interchain with G-Cter in SUMO2) cross-links involve residues Lys-600, Lys-605, Lys-635, Lys-643, Lys-646, Lys-676, and Lys-712. The Topo IIA-type catalytic domain occupies 736-1189 (IPSLVDGFKP…SPSDLWKEDL (454 aa)). Tyr-826 functions as the O-(5'-phospho-DNA)-tyrosine intermediate in the catalytic mechanism. Residues 1011 to 1020 (KLQTTLTCNS) form an interaction with DNA region. Positions 1034–1044 (ETVQDILKEFF) match the Nuclear export signal motif. Lys-1092 participates in a covalent cross-link: Glycyl lysine isopeptide (Lys-Gly) (interchain with G-Cter in SUMO2). A disordered region spans residues 1110-1140 (AWKEAQEKAAEEDETQNQHDDSSSDSGTPSG). Residues Lys-1214, Lys-1217, Lys-1226, and Lys-1227 each participate in a glycyl lysine isopeptide (Lys-Gly) (interchain with G-Cter in SUMO2) cross-link. Ser-1236 is modified (phosphoserine). Residues Lys-1250, Lys-1262, and Lys-1271 each participate in a glycyl lysine isopeptide (Lys-Gly) (interchain with G-Cter in SUMO2) cross-link. The interval 1274–1604 (FDEEFSGAPV…PSLPRTGRAR (331 aa)) is disordered. Thr-1292 bears the Phosphothreonine mark. Glycyl lysine isopeptide (Lys-Gly) (interchain with G-Cter in SUMO2) cross-links involve residues Lys-1323 and Lys-1327. 2 stretches are compositionally biased toward basic and acidic residues: residues 1334–1344 (PWSDDESKSES) and 1358–1370 (SLLRRAAAERPKY). Ser-1336, Ser-1340, Ser-1342, Ser-1344, and Ser-1358 each carry phosphoserine. Tyr-1370 carries the phosphotyrosine modification. Positions 1374 to 1392 (FSEEEDDDADDDDDDNNDL) are enriched in acidic residues. Ser-1375 bears the Phosphoserine mark. Residue Lys-1398 forms a Glycyl lysine isopeptide (Lys-Gly) (interchain with G-Cter in SUMO2) linkage. Residue Ser-1400 is modified to Phosphoserine. Phosphothreonine is present on Thr-1403. Ser-1413 bears the Phosphoserine mark. Tyr-1421 is subject to Phosphotyrosine. Ser-1424 carries the phosphoserine modification. Positions 1430–1442 (ATPEKSLHDKKSQ) are enriched in basic and acidic residues. Lys-1440 is covalently cross-linked (Glycyl lysine isopeptide (Lys-Gly) (interchain with G-Cter in SUMO2)). Ser-1441, Ser-1452, and Ser-1454 each carry phosphoserine. A Glycyl lysine isopeptide (Lys-Gly) (interchain with G-Cter in SUMO2) cross-link involves residue Lys-1456. Positions 1456-1466 (KSEDDSAKFDS) are enriched in basic and acidic residues. Phosphoserine occurs at positions 1461, 1466, 1473, and 1476. Residue Lys-1490 forms a Glycyl lysine isopeptide (Lys-Gly) (interchain with G-Cter in SUMO2) linkage. The interaction with PLSCR1 stretch occupies residues 1506–1512 (KPKRAPK). Phosphoserine is present on residues Ser-1522, Ser-1524, and Ser-1526. Basic residues predominate over residues 1539-1549 (GKGRGAKKRKA). Ser-1550 and Ser-1552 each carry phosphoserine. Basic residues predominate over residues 1563–1574 (KTSKTTSKKPKK). Thr-1575 bears the Phosphothreonine mark. Residues Ser-1576 and Ser-1581 each carry the phosphoserine modification. Thr-1592 carries the post-translational modification Phosphothreonine. Ser-1596 carries the post-translational modification Phosphoserine. Tyr-1609 bears the Phosphotyrosine mark. A Phosphoserine modification is found at Ser-1613.

It belongs to the type II topoisomerase family. As to quaternary structure, homodimer. Interacts with KIAA1210. Interacts with PLSCR1. Requires Mg(2+) as cofactor. Mn(2+) is required as a cofactor. It depends on Ca(2+) as a cofactor. (Microbial infection) Deubiquitinated by Epstein-Barr virus BPLF1; leading to stabilized SUMOylated TOP2A trapped in cleavage complexes, which halts the DNA damage response to TOP2A-induced double-strand DNA breaks. Post-translationally, SUMOylated. In terms of tissue distribution, expressed in the tonsil, spleen, lymph node, thymus, skin, pancreas, testis, colon, kidney, liver, brain and lung. Also found in breast, colon and lung carcinomas, Hodgkin's disease, large-cell non-Hodgkin's lymphoma, lymphocytic lymphomas and seminomas.

The protein resides in the nucleus. The protein localises to the nucleolus. It is found in the nucleoplasm. The enzyme catalyses ATP-dependent breakage, passage and rejoining of double-stranded DNA.. In terms of biological role, key decatenating enzyme that alters DNA topology by binding to two double-stranded DNA molecules, generating a double-stranded break in one of the strands, passing the intact strand through the broken strand, and religating the broken strand. Plays a role in B-cell differentiation. This Homo sapiens (Human) protein is DNA topoisomerase 2-beta (TOP2B).